The chain runs to 504 residues: Glucose-6-phosphate isomerase (504 aa).

The Proton donor role is filled by Glu-333. Active-site residues include His-364 and Lys-473.

The protein belongs to the GPI family.

Its subcellular location is the cytoplasm. It catalyses the reaction alpha-D-glucose 6-phosphate = beta-D-fructose 6-phosphate. Its pathway is carbohydrate biosynthesis; gluconeogenesis. The protein operates within carbohydrate degradation; glycolysis; D-glyceraldehyde 3-phosphate and glycerone phosphate from D-glucose: step 2/4. Functionally, catalyzes the reversible isomerization of glucose-6-phosphate to fructose-6-phosphate. The protein is Glucose-6-phosphate isomerase of Stenotrophomonas maltophilia (strain K279a).